A 517-amino-acid chain; its full sequence is tRNA (guanine-N(7)-)-methyltransferase non-catalytic subunit trm82 (517 aa).

Residues 40-117 (WKSPVPESMS…TKNSSPKILE (78 aa)) are disordered. The span at 52 to 64 (KTTEEETQTKNED) shows a compositional bias: basic and acidic residues. WD repeat units follow at residues 116–158 (LEPS…GLRQ), 260–301 (GHVS…HIIE), and 306–346 (GHIE…LLSK).

It belongs to the WD repeat TRM82 family. In terms of assembly, forms a heterodimer with the catalytic subunit trm8.

Its subcellular location is the nucleus. It functions in the pathway tRNA modification; N(7)-methylguanine-tRNA biosynthesis. In terms of biological role, required for the formation of N(7)-methylguanine at position 46 (m7G46) in tRNA. In the complex, it is required to stabilize and induce conformational changes of the catalytic subunit. This chain is tRNA (guanine-N(7)-)-methyltransferase non-catalytic subunit trm82 (trm82), found in Sclerotinia sclerotiorum (strain ATCC 18683 / 1980 / Ss-1) (White mold).